We begin with the raw amino-acid sequence, 307 residues long: Methionyl-tRNA formyltransferase (307 aa).

Residue 109 to 112 (SMLP) participates in (6S)-5,6,7,8-tetrahydrofolate binding.

Belongs to the Fmt family.

The enzyme catalyses L-methionyl-tRNA(fMet) + (6R)-10-formyltetrahydrofolate = N-formyl-L-methionyl-tRNA(fMet) + (6S)-5,6,7,8-tetrahydrofolate + H(+). In terms of biological role, attaches a formyl group to the free amino group of methionyl-tRNA(fMet). The formyl group appears to play a dual role in the initiator identity of N-formylmethionyl-tRNA by promoting its recognition by IF2 and preventing the misappropriation of this tRNA by the elongation apparatus. This Orientia tsutsugamushi (strain Boryong) (Rickettsia tsutsugamushi) protein is Methionyl-tRNA formyltransferase.